A 437-amino-acid chain; its full sequence is Adenylosuccinate synthetase, organellar chromatophore (437 aa).

Residues 12–18 (GDEGKGK) and 40–42 (GHT) each bind GTP. Residue Asp-13 is the Proton acceptor of the active site. Mg(2+) is bound by residues Asp-13 and Gly-40. IMP contacts are provided by residues 13–16 (DEGK), 38–41 (NAGH), Thr-128, Arg-142, Gln-223, Thr-238, and Arg-302. The active-site Proton donor is His-41. 298–304 (TTTGRRR) is a substrate binding site. Residues Arg-304 and 330-332 (KLD) contribute to the GTP site.

The protein belongs to the adenylosuccinate synthetase family. As to quaternary structure, homodimer. Mg(2+) is required as a cofactor.

It is found in the plastid. The protein resides in the organellar chromatophore. It catalyses the reaction IMP + L-aspartate + GTP = N(6)-(1,2-dicarboxyethyl)-AMP + GDP + phosphate + 2 H(+). It functions in the pathway purine metabolism; AMP biosynthesis via de novo pathway; AMP from IMP: step 1/2. Plays an important role in the de novo pathway and in the salvage pathway of purine nucleotide biosynthesis. Catalyzes the first committed step in the biosynthesis of AMP from IMP. The sequence is that of Adenylosuccinate synthetase, organellar chromatophore from Paulinella chromatophora.